The primary structure comprises 255 residues: Altered inheritance of mitochondria protein 36, mitochondrial (255 aa).

The N-terminal 40 residues, M1–Y40, are a transit peptide targeting the mitochondrion. Residues I64–L82 form a helical membrane-spanning segment.

Belongs to the AIM36 family.

The protein resides in the mitochondrion membrane. This is Altered inheritance of mitochondria protein 36, mitochondrial (AIM36) from Saccharomyces cerevisiae (strain RM11-1a) (Baker's yeast).